Consider the following 182-residue polypeptide: Nudix hydrolase 17, mitochondrial (182 aa).

Residues 1 to 26 (MGVEKMVCLASRTGRQFQRYNKGRRQ) constitute a mitochondrion transit peptide. The Nudix hydrolase domain maps to 27-158 (VVGCVPYRFK…WMKEALDVLV (132 aa)). Positions 65-86 (GGWELDESVEEAASRECLEEAG) match the Nudix box motif. 2 residues coordinate Mg(2+): glutamate 80 and glutamate 84.

Belongs to the Nudix hydrolase family. Requires Mg(2+) as cofactor. It depends on Mn(2+) as a cofactor. Expressed in roots, leaves, stems and inflorescences.

It is found in the mitochondrion. Probably mediates the hydrolysis of some nucleoside diphosphate derivatives. This Arabidopsis thaliana (Mouse-ear cress) protein is Nudix hydrolase 17, mitochondrial (NUDT17).